The chain runs to 237 residues: MTPEDFYMALKELGFDLSQKQKDQFQRYFELLVEWNEKINLTAITDKDEVFLKHFYDSLAPVLQGHIKNQSIQLLDIGAGAGFPSLPIKILCPNLDVTIIDSLNRRITFLNFLSDELGLSGVHFYHGRAEDFGQDKAFRAQFDIVTARAVARMQVLSELTIPFLKVGGQLIALKAAAADQELVDARNALNVLFAKPILNENYKLPNGDGRNITIIDKKKETPNKYPRRAGIPNKKPL.

S-adenosyl-L-methionine contacts are provided by residues Gly-78, Phe-83, 129–130, and Arg-148; that span reads AE.

The protein belongs to the methyltransferase superfamily. RNA methyltransferase RsmG family.

It is found in the cytoplasm. In terms of biological role, specifically methylates the N7 position of a guanine in 16S rRNA. This Streptococcus thermophilus (strain ATCC BAA-491 / LMD-9) protein is Ribosomal RNA small subunit methyltransferase G.